The primary structure comprises 133 residues: T-cell receptor beta chain V region 86T1 (133 aa).

A signal peptide spans 1–21 (MSCRLLLYVSLCLVETALMNT). The interval 22–113 (KITQSPRYLI…SAVYFCASSH (92 aa)) is v segment. N-linked (GlcNAc...) asparagine glycosylation is found at Asn-36 and Asn-75. Cysteines 41 and 109 form a disulfide. Residues 114–133 (GQGVSGNTLYFGEGSRLIVV) form a j segment region.

The protein is T-cell receptor beta chain V region 86T1 of Mus musculus (Mouse).